Consider the following 127-residue polypeptide: Fluoride-specific ion channel FluC 2 (127 aa).

The next 4 membrane-spanning stretches (helical) occupy residues 4–24 (IIAITGFAMLGGGLREGLSLL), 31–51 (FWITCLINIVGAFVLSLITNL), 62–82 (IVIGMSVGFVGSFTTFSTFTF), and 94–114 (VLALSYVAASLGLGLLAGLAG). The Na(+) site is built by G72 and T75.

The protein belongs to the fluoride channel Fluc/FEX (TC 1.A.43) family.

The protein resides in the cell membrane. It catalyses the reaction fluoride(in) = fluoride(out). Its activity is regulated as follows. Na(+) is not transported, but it plays an essential structural role and its presence is essential for fluoride channel function. Fluoride-specific ion channel. Important for reducing fluoride concentration in the cell, thus reducing its toxicity. This is Fluoride-specific ion channel FluC 2 from Lactiplantibacillus plantarum (strain ATCC BAA-793 / NCIMB 8826 / WCFS1) (Lactobacillus plantarum).